Here is a 154-residue protein sequence, read N- to C-terminus: 6,7-dimethyl-8-ribityllumazine synthase (154 aa).

5-amino-6-(D-ribitylamino)uracil contacts are provided by residues Phe-22, 56–58 (AFE), and 80–82 (AVI). 85–86 (AT) contacts (2S)-2-hydroxy-3-oxobutyl phosphate. The active-site Proton donor is His-88. Phe-113 contributes to the 5-amino-6-(D-ribitylamino)uracil binding site. Arg-127 is a (2S)-2-hydroxy-3-oxobutyl phosphate binding site.

Belongs to the DMRL synthase family.

It carries out the reaction (2S)-2-hydroxy-3-oxobutyl phosphate + 5-amino-6-(D-ribitylamino)uracil = 6,7-dimethyl-8-(1-D-ribityl)lumazine + phosphate + 2 H2O + H(+). It participates in cofactor biosynthesis; riboflavin biosynthesis; riboflavin from 2-hydroxy-3-oxobutyl phosphate and 5-amino-6-(D-ribitylamino)uracil: step 1/2. In terms of biological role, catalyzes the formation of 6,7-dimethyl-8-ribityllumazine by condensation of 5-amino-6-(D-ribitylamino)uracil with 3,4-dihydroxy-2-butanone 4-phosphate. This is the penultimate step in the biosynthesis of riboflavin. This chain is 6,7-dimethyl-8-ribityllumazine synthase, found in Clostridium botulinum (strain 657 / Type Ba4).